A 321-amino-acid chain; its full sequence is Methionyl-tRNA formyltransferase (321 aa).

111–114 (SLLP) is a (6S)-5,6,7,8-tetrahydrofolate binding site.

The protein belongs to the Fmt family.

It catalyses the reaction L-methionyl-tRNA(fMet) + (6R)-10-formyltetrahydrofolate = N-formyl-L-methionyl-tRNA(fMet) + (6S)-5,6,7,8-tetrahydrofolate + H(+). Its function is as follows. Attaches a formyl group to the free amino group of methionyl-tRNA(fMet). The formyl group appears to play a dual role in the initiator identity of N-formylmethionyl-tRNA by promoting its recognition by IF2 and preventing the misappropriation of this tRNA by the elongation apparatus. This chain is Methionyl-tRNA formyltransferase, found in Bifidobacterium animalis subsp. lactis (strain AD011).